A 207-amino-acid chain; its full sequence is Superoxide dismutase [Mn] (207 aa).

Positions 28, 76, 160, and 164 each coordinate Mn(2+).

This sequence belongs to the iron/manganese superoxide dismutase family. Mn(2+) is required as a cofactor.

The catalysed reaction is 2 superoxide + 2 H(+) = H2O2 + O2. Destroys superoxide anion radicals which are normally produced within the cells and which are toxic to biological systems. This is Superoxide dismutase [Mn] (sodA) from Nocardia asteroides.